Consider the following 550-residue polypeptide: Endonuclease/exonuclease/phosphatase family domain-containing protein 1 (550 aa).

Residues 39–68 (ERLNINTATEEELMTLPGVNRGVAQNIVEY) enclose the HhH domain. The segment covering 194-213 (STNTNGGFTHPSPTSFSVQS) has biased composition (polar residues). Residues 194-216 (STNTNGGFTHPSPTSFSVQSDEP) form a disordered region.

This Danio rerio (Zebrafish) protein is Endonuclease/exonuclease/phosphatase family domain-containing protein 1 (eepd1).